The primary structure comprises 321 residues: MQFYFSQIGRLFELIAAGKIRALLLYGPDKGYIEKICTYLIKNLNMLQSSIEYEDLNILSLDILLNSPNFFGQKELIKVRSIGNSLDKNLKTILSSDYINFPVFIGEDMNSSGSVKKFFETEEYLAVVACYHDDEAKIERIILGKLAKTNKVISKEAITYLKTHLKGDHALICSEINKLIFFAHDVHEITLNHVLEVISSEITANGSNLAIYFSKKDYSNFLQELDILKKQNINEVLIIRALIRHYLNLYIVLSKVKNGECLEIAIKSLSPPIFYHNINDFTKIVHALSLTECIKTLKLLQQAEVDYKLNPASFDLFQSIL.

It belongs to the DNA polymerase HolA subunit family. In terms of assembly, component of the DNA clamp loading complex consisting of tau(3):delta(1):delta'(1). The DNA polymerase III holoenzyme complex contains at least 10 different subunits organized into 3 functionally essential subassemblies: the Pol III core, the beta sliding clamp processivity factor and the clamp-loading complex. The Pol III core (subunits alpha, epsilon and theta) contains the polymerase and the 3'-5' exonuclease proofreading activities. The polymerase is tethered to the template via the dimeric beta sliding clamp processivity factor. The DNA clamp-loading complex assembles the beta sliding clamp onto the primed template and plays a central role in the organization and communication at the replication fork.

The enzyme catalyses DNA(n) + a 2'-deoxyribonucleoside 5'-triphosphate = DNA(n+1) + diphosphate. Functionally, part of the beta sliding clamp loading complex, which hydrolyzes ATP to load the beta clamp onto primed DNA to form the DNA replication pre-initiation complex. DNA polymerase III is a complex, multichain enzyme responsible for most of the replicative synthesis in bacteria. This DNA polymerase also exhibits 3'-5' exonuclease activity. The delta subunit is the wrench that will open the beta subunit dimer. The DNA clamp loading complex (tau(3),delta,delta') is thought to load beta dimers onto DNA by binding ATP which alters the complex's conformation so it can bind beta sliding clamp dimers and open them at one interface. Primed DNA is recognized, ATP is hydrolyzed releasing the clamp loading complex and closing the beta sliding clamp ring around the primed DNA. This chain is Probable DNA polymerase III subunit delta, found in Rickettsia prowazekii (strain Madrid E).